Consider the following 523-residue polypeptide: Sensory neuron membrane protein 1 (523 aa).

The Cytoplasmic portion of the chain corresponds to M1–A11. Residues I12 to L32 form a helical membrane-spanning segment. Over K33 to V458 the chain is Extracellular. 2 N-linked (GlcNAc...) asparagine glycosylation sites follow: N67 and N229. 3 disulfide bridges follow: C268-C333, C297-C352, and C335-C341. N-linked (GlcNAc...) asparagine glycosylation is present at N440. Residues G459–F479 traverse the membrane as a helical segment. Over H480 to I523 the chain is Cytoplasmic.

This sequence belongs to the CD36 family. Detected in sensory neurons in the antenna.

Its subcellular location is the cell membrane. In terms of biological role, plays an olfactory role that is not restricted to pheromone sensitivity. This Heliothis virescens (Tobacco budworm moth) protein is Sensory neuron membrane protein 1.